Consider the following 101-residue polypeptide: Small ribosomal subunit protein uS14 (101 aa).

It belongs to the universal ribosomal protein uS14 family. Part of the 30S ribosomal subunit. Contacts proteins S3 and S10.

Binds 16S rRNA, required for the assembly of 30S particles and may also be responsible for determining the conformation of the 16S rRNA at the A site. The chain is Small ribosomal subunit protein uS14 from Burkholderia ambifaria (strain MC40-6).